The sequence spans 467 residues: Glutamate--tRNA ligase (467 aa).

The 'HIGH' region signature appears at 9 to 19; it reads PSPTGFLHIGG. The short motif at 241 to 245 is the 'KMSKS' region element; that stretch reads KLSKR. K244 lines the ATP pocket.

This sequence belongs to the class-I aminoacyl-tRNA synthetase family. Glutamate--tRNA ligase type 1 subfamily. Monomer.

The protein resides in the cytoplasm. The catalysed reaction is tRNA(Glu) + L-glutamate + ATP = L-glutamyl-tRNA(Glu) + AMP + diphosphate. Catalyzes the attachment of glutamate to tRNA(Glu) in a two-step reaction: glutamate is first activated by ATP to form Glu-AMP and then transferred to the acceptor end of tRNA(Glu). The sequence is that of Glutamate--tRNA ligase from Methylobacillus flagellatus (strain ATCC 51484 / DSM 6875 / VKM B-1610 / KT).